A 444-amino-acid polypeptide reads, in one-letter code: MAPSIQSLSMIHDSQECIKPIPAFSCCYLLRSCVRHASLYIGSTPDPARRLAQHNGDRYGAAKRTLRENLRPWEMVAIVSGFTSRVAALQFEWAWQNTKVSRHADLDGNATQELGVRICPRTAKEVKRVAKPRTSLTNILANLHLLLRSPYFSKWPIEVRFFSADVHRVWQVWLQRVDGLLNDGIRVVTDFAPDGISEVEGKELLAGAGRVGTLDVGYNSIKEYVEKSQFLLEDGERINCGVCKQRLILQHDIIAVCSHSSCHCAAHLSCLSSHFLKDKDSDSELVPREGTCPTCYSKLEWLTMMKEISLRLRGQAEVNRLFGRRQRAGTPKGQGLKSVRGRGHSEDENESDALQVSTGLDTVNLPPCSDGPWTIDCAIGVLGGIAHRPGGVSSGNDSDATVTPEIETHPQRCRRNQNTRTQRLGLQKSAMINLSDWYDAEVIE.

The GIY-YIG domain maps to 23-105 (AFSCCYLLRS…QNTKVSRHAD (83 aa)). The SLX1-type zinc-finger motif lies at 240–295 (CGVCKQRLILQHDIIAVCSHSSCHCAAHLSCLSSHFLKDKDSDSELVPREGTCPTC). A disordered region spans residues 324 to 354 (RRQRAGTPKGQGLKSVRGRGHSEDENESDAL).

The protein belongs to the SLX1 family. As to quaternary structure, forms a heterodimer with SLX4. It depends on a divalent metal cation as a cofactor.

It localises to the nucleus. Functionally, catalytic subunit of the SLX1-SLX4 structure-specific endonuclease that resolves DNA secondary structures generated during DNA repair and recombination. Has endonuclease activity towards branched DNA substrates, introducing single-strand cuts in duplex DNA close to junctions with ss-DNA. The protein is Structure-specific endonuclease subunit SLX1 of Paracoccidioides lutzii (strain ATCC MYA-826 / Pb01) (Paracoccidioides brasiliensis).